The following is an 808-amino-acid chain: Probable inorganic carbon transporter subunit DabA (808 aa).

Positions 335, 337, 497, and 512 each coordinate Zn(2+).

The protein belongs to the inorganic carbon transporter (TC 9.A.2) DabA family. As to quaternary structure, forms a complex with DabB. It depends on Zn(2+) as a cofactor.

The protein resides in the cell inner membrane. Functionally, part of an energy-coupled inorganic carbon pump. This Rhodopseudomonas palustris (strain ATCC BAA-98 / CGA009) protein is Probable inorganic carbon transporter subunit DabA.